A 279-amino-acid chain; its full sequence is NAD kinase (279 aa).

Residue D57 is the Proton acceptor of the active site. Residues 57-58, 133-134, R159, D161, 172-177, and A196 each bind NAD(+); these read DG, NE, and TAYNKS.

Belongs to the NAD kinase family. The cofactor is a divalent metal cation.

The protein localises to the cytoplasm. The enzyme catalyses NAD(+) + ATP = ADP + NADP(+) + H(+). In terms of biological role, involved in the regulation of the intracellular balance of NAD and NADP, and is a key enzyme in the biosynthesis of NADP. Catalyzes specifically the phosphorylation on 2'-hydroxyl of the adenosine moiety of NAD to yield NADP. This is NAD kinase from Streptococcus thermophilus (strain CNRZ 1066).